The primary structure comprises 188 residues: Transcription antitermination protein NusB (188 aa).

Residues 154–188 form a disordered region; it reads RAANPGAVSGSDAPVAPWDDSEELPAEDEAEDSRP. Acidic residues predominate over residues 172 to 188; sequence DDSEELPAEDEAEDSRP.

Belongs to the NusB family.

In terms of biological role, involved in transcription antitermination. Required for transcription of ribosomal RNA (rRNA) genes. Binds specifically to the boxA antiterminator sequence of the ribosomal RNA (rrn) operons. This is Transcription antitermination protein NusB from Corynebacterium efficiens (strain DSM 44549 / YS-314 / AJ 12310 / JCM 11189 / NBRC 100395).